Consider the following 164-residue polypeptide: MAKKEKKAKVATITTKSGESLKVFEELNDFETFLRGEVEDNEFDHVHCKAKYYPPFVLHESHDDPEKIKDTNNSHNKKFVRHLHQHVEKHLLKDIREMFQNPDLKFKNKSKEETFEKITWHYADESELNAKKFRIQLDVTCTHDGAMVDVDYRTEPIAAQEPVI.

The protein belongs to the RGI1 family.

It localises to the cytoplasm. Involved in the control of energetic metabolism and significantly contribute to cell fitness, especially under respiratory growth conditions. In Candida glabrata (strain ATCC 2001 / BCRC 20586 / JCM 3761 / NBRC 0622 / NRRL Y-65 / CBS 138) (Yeast), this protein is Respiratory growth induced protein 2 (RGI2).